We begin with the raw amino-acid sequence, 104 residues long: Replication restart protein PriB (104 aa).

The SSB domain occupies M1–D101.

Belongs to the PriB family. In terms of assembly, homodimer. Interacts with PriA and DnaT. Component of the replication restart primosome. Primosome assembly occurs via a 'hand-off' mechanism. PriA binds to replication forks, subsequently PriB then DnaT bind; DnaT then displaces ssDNA to generate the helicase loading substrate.

Functionally, involved in the restart of stalled replication forks, which reloads the replicative helicase on sites other than the origin of replication; the PriA-PriB pathway is the major replication restart pathway. During primosome assembly it facilitates complex formation between PriA and DnaT on DNA; stabilizes PriA on DNA. Stimulates the DNA unwinding activity of PriA helicase. The polypeptide is Replication restart protein PriB (Citrobacter koseri (strain ATCC BAA-895 / CDC 4225-83 / SGSC4696)).